The following is a 703-amino-acid chain: Elongation factor G (703 aa).

A tr-type G domain is found at 10 to 286; the sequence is NKVRNIGIMA…AVVKFLPSPL (277 aa). GTP is bound by residues 19–26, 83–87, and 137–140; these read AHIDAGKT, DTPGH, and NKLD.

It belongs to the TRAFAC class translation factor GTPase superfamily. Classic translation factor GTPase family. EF-G/EF-2 subfamily.

It localises to the cytoplasm. Catalyzes the GTP-dependent ribosomal translocation step during translation elongation. During this step, the ribosome changes from the pre-translocational (PRE) to the post-translocational (POST) state as the newly formed A-site-bound peptidyl-tRNA and P-site-bound deacylated tRNA move to the P and E sites, respectively. Catalyzes the coordinated movement of the two tRNA molecules, the mRNA and conformational changes in the ribosome. This chain is Elongation factor G, found in Nocardioides sp. (strain ATCC BAA-499 / JS614).